The sequence spans 138 residues: Acidic phospholipase A2 Cvv-E6a (138 aa).

A signal peptide spans methionine 1–glycine 16. Disulfide bonds link cysteine 42-cysteine 131, cysteine 44-cysteine 60, cysteine 59-cysteine 111, cysteine 65-cysteine 138, cysteine 66-cysteine 104, cysteine 73-cysteine 97, and cysteine 91-cysteine 102. The Ca(2+) site is built by tyrosine 43, glycine 45, and glycine 47. Histidine 63 is a catalytic residue. Residue aspartate 64 coordinates Ca(2+). Residue aspartate 105 is part of the active site.

The protein belongs to the phospholipase A2 family. Group II subfamily. D49 sub-subfamily. Requires Ca(2+) as cofactor. Expressed by the venom gland.

The protein localises to the secreted. It catalyses the reaction a 1,2-diacyl-sn-glycero-3-phosphocholine + H2O = a 1-acyl-sn-glycero-3-phosphocholine + a fatty acid + H(+). Snake venom phospholipase A2 (PLA2) that significantly inhibits ADP-induced platelet aggregation in platelet-rich plasma of human, rabbit and guinea pig. PLA2 catalyzes the calcium-dependent hydrolysis of the 2-acyl groups in 3-sn-phosphoglycerides. This Crotalus viridis viridis (Prairie rattlesnake) protein is Acidic phospholipase A2 Cvv-E6a.